Reading from the N-terminus, the 255-residue chain is Superoxide dismutase [Fe] 2, chloroplastic (255 aa).

Residues 1–32 (MAAFASALRVLPSPPAAVPRRLRSREQRQGCR) constitute a chloroplast transit peptide. Residues histidine 67, histidine 119, aspartate 203, and histidine 207 each coordinate Fe cation.

Belongs to the iron/manganese superoxide dismutase family. In terms of assembly, homodimer. Fe cation is required as a cofactor. Strongly expressed in the stems of the young seedlings, etiolated seedlings and embryogenic calli, but only minimally expressed in the leaves and the roots.

Its subcellular location is the plastid. It is found in the chloroplast. It catalyses the reaction 2 superoxide + 2 H(+) = H2O2 + O2. Destroys superoxide anion radicals which are normally produced within the cells and which are toxic to biological systems. The chain is Superoxide dismutase [Fe] 2, chloroplastic from Oryza sativa subsp. japonica (Rice).